A 200-amino-acid polypeptide reads, in one-letter code: Cleavage and polyadenylation specificity factor subunit 5 (200 aa).

One can recognise a Nudix hydrolase domain in the interval 45–170; it reads LRKAVEGIII…LSLIAVSLYE (126 aa). The interval 70 to 72 is interaction with RNA; that stretch reads NYF. The Nudix box signature appears at 77-98; that stretch reads GKLKPGENEIDGLIRKLTKKLS.

The protein belongs to the Nudix hydrolase family. CPSF5 subfamily. In terms of assembly, homodimer (via N- and C-terminus); binds RNA as homodimer. Component of the cleavage factor Im (CFIm) complex.

It localises to the nucleus. Its subcellular location is the cytoplasm. Functionally, component of the cleavage factor Im (CFIm) complex that functions as an activator of the pre-mRNA 3'-end cleavage and polyadenylation processing required for the maturation of pre-mRNA into functional mRNAs. CFIm contributes to the recruitment of multiprotein complexes on specific sequences on the pre-mRNA 3'-end, so called cleavage and polyadenylation signals (pA signals). Most pre-mRNAs contain multiple pA signals, resulting in alternative cleavage and polyadenylation (APA) producing mRNAs with variable 3'-end formation. The CFIm complex acts as a key regulator of cleavage and polyadenylation site choice during APA through its binding to 5'-UGUA-3' elements localized in the 3'-untranslated region (UTR) for a huge number of pre-mRNAs. Binds to 5'-UGUA-3' elements localized upstream of pA signals that act as enhancers of pre-mRNA 3'-end processing. The homodimer mediates simultaneous sequence-specific recognition of two 5'-UGUA-3' elements within the pre-mRNA. Plays a role in somatic cell fate transitions and pluripotency by regulating widespread changes in gene expression through an APA-dependent function. Binds to chromatin. This Dictyostelium discoideum (Social amoeba) protein is Cleavage and polyadenylation specificity factor subunit 5.